A 363-amino-acid polypeptide reads, in one-letter code: Aminomethyltransferase (363 aa).

Belongs to the GcvT family. The glycine cleavage system is composed of four proteins: P, T, L and H.

The catalysed reaction is N(6)-[(R)-S(8)-aminomethyldihydrolipoyl]-L-lysyl-[protein] + (6S)-5,6,7,8-tetrahydrofolate = N(6)-[(R)-dihydrolipoyl]-L-lysyl-[protein] + (6R)-5,10-methylene-5,6,7,8-tetrahydrofolate + NH4(+). Functionally, the glycine cleavage system catalyzes the degradation of glycine. The polypeptide is Aminomethyltransferase (Nitrosomonas europaea (strain ATCC 19718 / CIP 103999 / KCTC 2705 / NBRC 14298)).